The sequence spans 433 residues: Acetylcholine receptor-like protein cup-4 (433 aa).

Positions 1–24 (MKIIIFVCFILIFYLPIQKKHVNS) are cleaved as a signal peptide. 2 N-linked (GlcNAc...) asparagine glycosylation sites follow: asparagine 41 and asparagine 68. Cysteines 178 and 192 form a disulfide. 2 N-linked (GlcNAc...) asparagine glycosylation sites follow: asparagine 237 and asparagine 249. 4 consecutive transmembrane segments (helical) span residues 282 to 302 (EAAV…TFFI), 307 to 327 (STFL…HDLV), 337 to 357 (IPFC…TLVL), and 413 to 433 (PIIG…CLLL).

Belongs to the ligand-gated ion channel (TC 1.A.9) family. Acetylcholine receptor (TC 1.A.9.1) subfamily. As to expression, expressed in coelomocytes.

Its subcellular location is the cytoplasmic vesicle membrane. Functionally, thought to regulate endocytosis in coelomocytes through modulation of phospholipase C activity. Possible acetylcholine receptor. This Caenorhabditis elegans protein is Acetylcholine receptor-like protein cup-4 (cup-4).